We begin with the raw amino-acid sequence, 145 residues long: D-aminoacyl-tRNA deacylase (145 aa).

The short motif at glycine 137–proline 138 is the Gly-cisPro motif, important for rejection of L-amino acids element.

This sequence belongs to the DTD family. Homodimer.

The protein localises to the cytoplasm. The catalysed reaction is glycyl-tRNA(Ala) + H2O = tRNA(Ala) + glycine + H(+). It carries out the reaction a D-aminoacyl-tRNA + H2O = a tRNA + a D-alpha-amino acid + H(+). An aminoacyl-tRNA editing enzyme that deacylates mischarged D-aminoacyl-tRNAs. Also deacylates mischarged glycyl-tRNA(Ala), protecting cells against glycine mischarging by AlaRS. Acts via tRNA-based rather than protein-based catalysis; rejects L-amino acids rather than detecting D-amino acids in the active site. By recycling D-aminoacyl-tRNA to D-amino acids and free tRNA molecules, this enzyme counteracts the toxicity associated with the formation of D-aminoacyl-tRNA entities in vivo and helps enforce protein L-homochirality. In Ruegeria pomeroyi (strain ATCC 700808 / DSM 15171 / DSS-3) (Silicibacter pomeroyi), this protein is D-aminoacyl-tRNA deacylase.